The chain runs to 549 residues: Speedy protein E3 (549 aa).

Over residues Met1 to Gln15 the composition is skewed to low complexity. Disordered stretches follow at residues Met1–Glu74, Lys126–Pro145, Ser188–Pro218, Ser261–Pro291, and Ser334–Pro364. 5 stretches are compositionally biased toward acidic residues: residues Asp58–Glu74, Asp131–Pro145, Asp204–Pro218, Asp277–Pro291, and Asp350–Pro364.

Belongs to the Speedy/Ringo family. Predominantly expressed in testis and spleen.

The polypeptide is Speedy protein E3 (Homo sapiens (Human)).